The sequence spans 628 residues: Otolith matrix protein OMM-64 (628 aa).

The first 20 residues, 1 to 20, serve as a signal peptide directing secretion; that stretch reads MLSRLLIVPLIFALAGLAIS. Residues 43–628 are disordered; sequence KGDKDGGGLT…AAATALAAQS (586 aa). The segment covering 78–93 has biased composition (low complexity); the sequence is DSSPDTTDTPDASSSD. The span at 182-214 shows a compositional bias: polar residues; it reads TESPGSDSAESPGSDSAESPGSDSTESPGSDST. 3 stretches are compositionally biased toward basic and acidic residues: residues 246–266, 276–285, and 311–343; these read ETDK…ATDK, ELDGKAHAED, and RPEK…RDSA. The N-linked (GlcNAc...) asparagine glycan is linked to Asn318. Acidic residues-rich tracts occupy residues 449 to 462, 477 to 489, 514 to 536, 544 to 556, and 565 to 578; these read DSQE…EAEP, EPQE…DTDD, DKED…MDKD, DSVD…DAEP, and DEID…PDSE. The span at 613-628 shows a compositional bias: low complexity; that stretch reads ASQAADAAATALAAQS.

In terms of tissue distribution, specifically expressed in otolith matrix-producing cells.

The protein resides in the secreted. The protein localises to the extracellular space. It is found in the extracellular matrix. Calcium-binding component of otoliths, a calcium carbonate structure of the inner ear involved in hearing and balance sensing. Binds calcium. This Oncorhynchus mykiss (Rainbow trout) protein is Otolith matrix protein OMM-64.